The sequence spans 123 residues: Large ribosomal subunit protein uL18 (123 aa).

Belongs to the universal ribosomal protein uL18 family. In terms of assembly, part of the 50S ribosomal subunit; part of the 5S rRNA/L5/L18/L25 subcomplex. Contacts the 5S and 23S rRNAs.

This is one of the proteins that bind and probably mediate the attachment of the 5S RNA into the large ribosomal subunit, where it forms part of the central protuberance. This Chlamydia trachomatis serovar L2 (strain ATCC VR-902B / DSM 19102 / 434/Bu) protein is Large ribosomal subunit protein uL18.